We begin with the raw amino-acid sequence, 692 residues long: Elongation factor G (692 aa).

Residues 8-282 (ENTRNIGIMA…AVIDYLPSPL (275 aa)) form the tr-type G domain. GTP contacts are provided by residues 17-24 (AHIDAGKT), 81-85 (DTPGH), and 135-138 (NKMD).

Belongs to the TRAFAC class translation factor GTPase superfamily. Classic translation factor GTPase family. EF-G/EF-2 subfamily.

The protein resides in the cytoplasm. Functionally, catalyzes the GTP-dependent ribosomal translocation step during translation elongation. During this step, the ribosome changes from the pre-translocational (PRE) to the post-translocational (POST) state as the newly formed A-site-bound peptidyl-tRNA and P-site-bound deacylated tRNA move to the P and E sites, respectively. Catalyzes the coordinated movement of the two tRNA molecules, the mRNA and conformational changes in the ribosome. This chain is Elongation factor G, found in Bacillus cereus (strain ATCC 14579 / DSM 31 / CCUG 7414 / JCM 2152 / NBRC 15305 / NCIMB 9373 / NCTC 2599 / NRRL B-3711).